Reading from the N-terminus, the 196-residue chain is MSYYIPYVIERTGRGERSYDIYSRLLKDRIIMLSGEINDAVASSIVAQLLFLEAEDPDKDIYLYINSPGGVITSGMSIYDTMNYIKPDVSTICIGQAASMGAFLLSSGTKGKRYALPHARIMIHQPLGGAQGQATDIEIQAKEILRLKKILNEILAENTGQSVKKIAKDTERDFFMSSEEAKEYGLIDQVLEKSAR.

Ser99 serves as the catalytic Nucleophile. Residue His124 is part of the active site.

Belongs to the peptidase S14 family. In terms of assembly, fourteen ClpP subunits assemble into 2 heptameric rings which stack back to back to give a disk-like structure with a central cavity, resembling the structure of eukaryotic proteasomes.

It is found in the cytoplasm. It catalyses the reaction Hydrolysis of proteins to small peptides in the presence of ATP and magnesium. alpha-casein is the usual test substrate. In the absence of ATP, only oligopeptides shorter than five residues are hydrolyzed (such as succinyl-Leu-Tyr-|-NHMec, and Leu-Tyr-Leu-|-Tyr-Trp, in which cleavage of the -Tyr-|-Leu- and -Tyr-|-Trp bonds also occurs).. Cleaves peptides in various proteins in a process that requires ATP hydrolysis. Has a chymotrypsin-like activity. Plays a major role in the degradation of misfolded proteins. In Nitratiruptor sp. (strain SB155-2), this protein is ATP-dependent Clp protease proteolytic subunit.